A 1015-amino-acid polypeptide reads, in one-letter code: DNA polymerase catalytic subunit (1015 aa).

Belongs to the DNA polymerase type-B family. In terms of assembly, forms a complex with the major DNA-binding protein BALF2, the DNA polymerase processivity factor BMRF1, and the alkaline exonuclease BGLF5. Interacts with the putative helicase-primase complex composed of BBLF4, BSLF1 and BBLF2/3 proteins; these interactions may coordinate leading and lagging strand DNA synthesis at the replication fork.

The protein resides in the host nucleus. The enzyme catalyses DNA(n) + a 2'-deoxyribonucleoside 5'-triphosphate = DNA(n+1) + diphosphate. Functionally, replicates viral genomic DNA in the late phase of lytic infection, producing long concatemeric DNA. The replication complex is composed of six viral proteins: the DNA polymerase, processivity factor, primase, primase-associated factor, helicase, and ssDNA-binding protein. This is DNA polymerase catalytic subunit from Homo sapiens (Human).